A 780-amino-acid polypeptide reads, in one-letter code: MGKKRIYELAKEINVSSKQIIAKAEEKGFPVKNHMSTLGENEERQLRAAFKPQAKTSHEQSAASAQPQRKVQQPRREKSQGTARTQTTAQKPAGKPANQTQRNNNNKNNGQTGNRQHEQQHSGTGRFGGSLNNNTNNSNGRRNSNNSNSRGGRNSRNNRNNRRRNNNNNNRYKKNQRIKDTNQHKGAPERKNKALPEVLVYTDGMNAQDLAKILHRSSAEIVKKLFMLGVMVNQNQSLDKDTIEILADDYGIQAQEKVEVDVTDIDKFFDAEMANKDFEAPRAPVVTIMGHVDHGKTTLLDHLRHSHITDGEAGGITQAIGAYQVHYNDKVITFLDTPGHAAFTEMRARGAEITDITVLVVAADDGVMPQTIEAIHHAKAAGTPIIVAVNKIDKPGANPNHVMEQLTEYELIPEDWGGDTIFVEISAKFGKNIDELLDMILLQSDVLELKANPKQNGVGSVIEARLDQGKGSVATLLVQQGTLHVGDPIVVGNTFGRVRTMVNERGRRIKDATPSTPVEITGLNDVPEAGDRFVVFDDEKTARAAGEERAKEALVKERRNTSHVTLDNLFDSLKEGEMKEVDVIIKADVQGSVEALAGSLKKIDVSGVRVNIIHSAVGAINESDVTLAEASDAIIIGFNVRPTPQARAQADSDKVDIRLHNVIYNAIDEIETAMKGLLEPTYEEEIIGEVEVKDIFHASKVGTIVGGMVTEGYVTSESDVRLIRDGVVIYEGKLGSLKRFKDDVKQVKMGYELGLTIENYNDVKVGDVIEAYVMKEVPVK.

The tract at residues 24–194 (AEEKGFPVKN…KGAPERKNKA (171 aa)) is disordered. Polar residues-rich tracts occupy residues 59–71 (EQSA…QRKV) and 80–90 (QGTARTQTTAQ). Composition is skewed to low complexity over residues 98–114 (NQTQ…QTGN) and 132–158 (NNNT…SRNN). A compositionally biased stretch (basic residues) spans 159–176 (RNNRRRNNNNNNRYKKNQ). Residues 177–194 (RIKDTNQHKGAPERKNKA) show a composition bias toward basic and acidic residues. The tr-type G domain maps to 281-450 (PRAPVVTIMG…LLQSDVLELK (170 aa)). Residues 290–297 (GHVDHGKT) form a G1 region. 290–297 (GHVDHGKT) provides a ligand contact to GTP. The segment at 315 to 319 (GITQA) is G2. The interval 336-339 (DTPG) is G3. Residues 336 to 340 (DTPGH) and 390 to 393 (NKID) contribute to the GTP site. The segment at 390–393 (NKID) is G4. Residues 426–428 (SAK) form a G5 region.

The protein belongs to the TRAFAC class translation factor GTPase superfamily. Classic translation factor GTPase family. IF-2 subfamily.

It localises to the cytoplasm. One of the essential components for the initiation of protein synthesis. Protects formylmethionyl-tRNA from spontaneous hydrolysis and promotes its binding to the 30S ribosomal subunits. Also involved in the hydrolysis of GTP during the formation of the 70S ribosomal complex. In Levilactobacillus brevis (strain ATCC 367 / BCRC 12310 / CIP 105137 / JCM 1170 / LMG 11437 / NCIMB 947 / NCTC 947) (Lactobacillus brevis), this protein is Translation initiation factor IF-2.